A 1013-amino-acid polypeptide reads, in one-letter code: PHD finger protein 20-like protein 1 (1013 aa).

In terms of domain architecture, Tudor 1 spans 11–71; sequence ITFEIGARLE…SNRLRPLERP (61 aa). Residues Lys75 and Lys79 each participate in a glycyl lysine isopeptide (Lys-Gly) (interchain with G-Cter in SUMO2) cross-link. A Tudor 2 domain is found at 85 to 141; that stretch reads FDFKAGEEVLARWTDCRYYPAKIEAINKEGTFTVQFYDGVIRCLKRMHIKAMPEDAK. 4 disordered regions span residues 183–206, 309–368, 389–454, and 482–511; these read AKNKTGTKPRASANSNKEKERDGG, EQAI…TPKS, VINK…QSSV, and VTGSRTPHPSYHGGECPREEKEETPLFANP. The span at 315–346 shows a compositional bias: polar residues; sequence KPQSQKKNEAVISSSANTQKPALLSSTLSSGK. Ser368 is modified (phosphoserine). The segment covering 404 to 415 has biased composition (basic residues); it reads PCKHSERRRRSQ. Ser432 is modified (phosphoserine). A compositionally biased stretch (low complexity) spans 443 to 453; sequence SISSQNQQQSS. Over residues 496–505 the composition is skewed to basic and acidic residues; it reads ECPREEKEET. Residue Lys530 forms a Glycyl lysine isopeptide (Lys-Gly) (interchain with G-Cter in SUMO2) linkage. Basic and acidic residues predominate over residues 533-565; it reads KKVKLEEKTSTAFGKRKEKDKEKKEKRDKDHYK. The disordered stretch occupies residues 533–585; that stretch reads KKVKLEEKTSTAFGKRKEKDKEKKEKRDKDHYKPKQKKKKKKKKKSKQHDYSD. Over residues 566–579 the composition is skewed to basic residues; that stretch reads PKQKKKKKKKKKSK. Residues 681–729 form a PHD-type zinc finger; that stretch reads IVRCICELDEENGFMIQCEECLCWQHSVCMGLLEDSIPEQYICYICRDP. Basic and acidic residues predominate over residues 824–852; it reads RKITPQDRANSEGKECVQNHKEPALRMEE. Positions 824-911 are disordered; that stretch reads RKITPQDRAN…LLYKNRGVSE (88 aa). Over residues 854–878 the composition is skewed to polar residues; the sequence is YITSEHSYQKPQSFSQDCQSLTDPG. Acidic residues predominate over residues 879–892; sequence SSDDDDASSFEEDG. Lys905 is subject to N6-acetyllysine.

In terms of assembly, interacts with methylated DNMT1 (DNMT1K142me1). Interacts with SOX2.

The protein localises to the nucleus. Is a negative regulator of proteasomal degradation of a set of methylated proteins, including DNMT1 and SOX2. Involved in the maintainance of embryonic stem cells pluripotency, through the regulation of SOX2 levels. The sequence is that of PHD finger protein 20-like protein 1 (Phf20l1) from Mus musculus (Mouse).